A 6793-amino-acid polypeptide reads, in one-letter code: Replicase polyprotein 1ab (6793 aa).

The CoV Nsp1 globular domain occupies 2–109 (ASNHISLAFA…ELDLVFGRCG (108 aa)). Positions 112–368 (TIPVDQFMCG…TKFKFQLLAN (257 aa)) constitute a CoV Nsp2 N-terminal domain. Positions 396 to 785 (ILGLPWFVKK…LDTVTSFIKV (390 aa)) constitute a CoV Nsp2 middle domain. In terms of domain architecture, CoV Nsp2 C-terminal spans 776-897 (LDTVTSFIKV…VASCFKKKGG (122 aa)). Residues 898–993 (GVVTISDEVQ…IMVSQWPLSS (96 aa)) form the Ubiquitin-like 1 domain. The Peptidase C16 1 domain maps to 1069-1302 (AFIEDKPVVV…SCDVKPFLTY (234 aa)). Cysteine 1103 serves as the catalytic For PL1-PRO activity. The C4-type 1; degenerate zinc finger occupies 1174–1205 (CGCGPGVRVYENAIFRFTPLKTAFPMGRCLIC). Catalysis depends on for PL1-PRO activity residues histidine 1252 and aspartate 1265. A Macro domain is found at 1303–1467 (KNIEFYQGEL…FQTEQPVEPL (165 aa)). The Ubiquitin-like 2 domain maps to 1638–1693 (AKPVQVVVTQDQRSFHTVELSTSQTYGQQLGDCVVEDKKVTNLKPVSKDKVVSVVP). One can recognise a Peptidase C16 2 domain in the interval 1699 to 1965 (KHYGFVDAGI…FLDTMNVASE (267 aa)). The active-site For PL2-PRO activity is the cysteine 1737. The C4-type 2; degenerate zinc-finger motif lies at 1816-1849 (TTCDGTCSTKRVVSTPVVNASVLKVGLDDGNCVH). Active-site for PL2-PRO activity residues include histidine 1902 and aspartate 1915. The next 2 helical transmembrane spans lie at 1973-1993 (FVSRNIIVLIVYLFSLLAICF) and 2036-2056 (YIKVFLKFSLVLYTLYALMFM). The segment at 1973-2184 (FVSRNIIVLI…MGNIIVVAFI (212 aa)) is HD1. The 3Ecto domain occupies 2052 to 2116 (ALMFMFIRFT…TRVIWQHLKD (65 aa)). Cystine bridges form between cysteine 2068/cysteine 2094 and cysteine 2086/cysteine 2091. 3 helical membrane-spanning segments follow: residues 2119–2139 (IGNILPLFYLVFLIIFGGFFV), 2141–2161 (IGITYFIMQYINAAGVALGYQ), and 2164–2184 (VWLLHLLPFNSMGNIIVVAFI). The segment at 2190 to 2280 (LFLKHVLFGC…VTKLNVIPTG (91 aa)) is Y1. Residues 2190 to 2530 (LFLKHVLFGC…PTISVANKKG (341 aa)) enclose the CoV Nsp3 Y domain. Histidine 2194, cysteine 2199, cysteine 2204, cysteine 2207, cysteine 2240, histidine 2243, cysteine 2247, and cysteine 2250 together coordinate Zn(2+). A ZF1 region spans residues 2194-2207 (HVLFGCDKPSCIAC). The interval 2240 to 2250 (CKKHNFFCVDC) is ZF2. The segment at 2281–2370 (PATIIIDKVE…LVDSALLASL (90 aa)) is Y2. Residues 2281 to 2530 (PATIIIDKVE…PTISVANKKG (250 aa)) are coV-Y. The Y3 stretch occupies residues 2371–2428 (NVDFSANLHKAFVEVLSNSFGKDLSNCSNMNECRESLGLSDVPEEEFSAAVSEAHRYD). Residues 2429–2530 (VLISDVSFNN…PTISVANKKG (102 aa)) are Y4. The next 7 helical transmembrane spans lie at 2543 to 2563 (FFWHLCVLIVVLFVATSLLDF), 2634 to 2654 (VPAGVFLYGKSLIFAMSTIFG), 2669 to 2689 (DSCIFNSACTTLSGIGGRNVY), 2769 to 2789 (GSDYVCGTGFFSLLFNVIGMF), 2802 to 2822 (ILLNCVVAFTAVMACFAFTKF), 2829 to 2849 (MSFGVLSVGLCTVVNNLSYVV), and 2878 to 2898 (VGFAISYCFLAPWWVVLAYLI). Residues 2543-2898 (FFWHLCVLIV…PWWVVLAYLI (356 aa)) form an HD2 region. Residues 2917-3012 (LFEGDKFVGS…PTVSYNSTLQ (96 aa)) enclose the Nsp4C domain. One can recognise a Peptidase C30 domain in the interval 3013-3314 (AGLRKMAQPS…VKQMYGVTLQ (302 aa)). Active-site for 3CL-PRO activity residues include histidine 3053 and cysteine 3156. 7 helical membrane passes run 3351-3371 (GYITPVFLAIIVASSALMLLV), 3376-3396 (LFLQLYLLPSLCIVSGYNIFK), 3414-3434 (FGGFNVTGVLNISLCCFVMGL), 3443-3463 (PNKIFSYVVAVLTVLYTYYYS), 3466-3486 (VLGLILTSMSGFTNYWFIGTA), 3488-3507 (YKLATYVLPHTSLLDSFDAI), and 3511-3531 (VFLYLLLGYCNCVYYGSLYWI). An HD3 region spans residues 3351–3531 (GYITPVFLAI…CVYYGSLYWI (181 aa)). The region spanning 3591 to 3673 (SKLTDLKCTN…SYFNDSSVLQ (83 aa)) is the RdRp Nsp7 cofactor domain. A RdRp Nsp8 cofactor domain is found at 3674–3868 (SVAATYVNLP…LNCERIIKLQ (195 aa)). A Nsp9 ssRNA-binding domain is found at 3869-3976 (NNEIIPSKIK…GFIGATVRLQ (108 aa)). The 139-residue stretch at 3977–4115 (AGKQTEQATN…DRAVIQSVDS (139 aa)) folds into the ExoN/MTase coactivator domain. Residues cysteine 4050, cysteine 4053, histidine 4059, cysteine 4066, cysteine 4092, cysteine 4095, cysteine 4103, and cysteine 4105 each contribute to the Zn(2+) site. 2 zinc fingers span residues 4050–4066 (CLYCRAHVEHPDMDGFC) and 4092–4105 (CKVCGCWQANGCTC). Residues 4117-4366 (YLNRVRGSSA…ASECFIKSDI (250 aa)) enclose the NiRAN domain. The Nsp12 Interface domain occupies 4372 to 4470 (RTFDLLAYDF…WNKDLNLHSS (99 aa)). 5 residues coordinate Zn(2+): histidine 4401, cysteine 4407, cysteine 4412, cysteine 4416, and cysteine 4593. The Nsp12 RNA-dependent RNA polymerase domain occupies 4471 to 5038 (RLTINELLQF…SMYEQSSVLQ (568 aa)). The segment at 4473–4687 (TINELLQFCA…HQKHLKSIVN (215 aa)) is rdRp Fingers N-ter. Positions 4688–4726 (TRGASVVIGTTKFYGGWDNMLKTLIKDVENPHLMGWDYP) are rdRp Palm N-ter. The 163-residue stretch at 4718-4880 (PHLMGWDYPK…CYNSEYAALG (163 aa)) folds into the RdRp catalytic domain. The interval 4727–4785 (KCDRALPNMIRMISAMILGSKHVNCCSSSDRYYRLCNELAQVLTEMVYSNGGFYVKPGG) is rdRp Fingers C-ter. 3 residues coordinate Zn(2+): histidine 4748, cysteine 4751, and cysteine 4752. The interval 4786-4921 (TTSGDATTAY…NKGPHEFCSQ (136 aa)) is rdRp Palm C-ter. Catalysis depends on residues serine 4865, aspartate 4866, and aspartate 4867. The rdRp Thumb stretch occupies residues 4922 to 5038 (HTMQIVDKDG…SMYEQSSVLQ (117 aa)). The CV ZBD domain maps to 5039–5151 (SAGLCVVCSS…DDFNTLATSD (113 aa)). 12 residues coordinate Zn(2+): cysteine 5043, cysteine 5046, cysteine 5054, cysteine 5057, cysteine 5064, cysteine 5067, histidine 5071, histidine 5077, cysteine 5088, cysteine 5093, cysteine 5110, and histidine 5113. In terms of domain architecture, (+)RNA virus helicase ATP-binding spans 5296 to 5477 (NIHEDYSNLI…MCVLKPDIFL (182 aa)). 5321 to 5328 (GPPGSGKS) is a binding site for ATP. The (+)RNA virus helicase C-terminal domain maps to 5478–5647 (HKCYRCPAEI…DGCGLFKDCY (170 aa)). Residues 5707–5921 (LFCTRDFAMR…RCLAIHDCFV (215 aa)) form the ExoN domain. Active-site residues include aspartate 5725, glutamate 5727, and glutamate 5826. 7 residues coordinate Zn(2+): cysteine 5842, cysteine 5844, cysteine 5860, histidine 5863, histidine 5891, cysteine 5895, and histidine 5898. Catalysis depends on residues histidine 5902 and aspartate 5907. Cysteine 5913 is a Zn(2+) binding site. The 222-residue stretch at 5930–6151 (YPFIANEQAI…NLWQTFKNSN (222 aa)) folds into the N7-MTase domain. Residue 5965–5971 (DVGNPKG) participates in S-adenosyl-L-methionine binding. Residues 6042–6056 (CNGGSLYVNNHAFHT) are gpppA-binding. Cysteine 6080, cysteine 6097, cysteine 6108, and histidine 6111 together coordinate Zn(2+). In terms of domain architecture, Nsp15 N-terminal oligomerization spans 6154–6214 (GLENIAYNVV…NVAFELYAKR (61 aa)). The AV-Nsp11N/CoV-Nsp15M domain occupies 6215-6332 (KVGLTPPLTI…IYTRKDGAFV (118 aa)). Residues 6349 to 6489 (QPRSNMEEDF…KDHKVQTFYP (141 aa)) form the NendoU domain. Catalysis depends on residues histidine 6379, histidine 6394, lysine 6435, lysine 6537, aspartate 6621, lysine 6661, and glutamate 6694. Residues 6493–6789 (SAEWKCGYSM…VVCGFSNHLV (297 aa)) enclose the Nidovirus-type SAM-dependent 2'-O-MTase domain.

Belongs to the coronaviruses polyprotein 1ab family. In terms of assembly, 3CL-PRO exists as monomer and homodimer. Eight copies of nsp7 and eight copies of nsp8 assemble to form a heterohexadecamer. Nsp9 is a dimer. Nsp10 forms a dodecamer. The cofactor is Mn(2+). Post-translationally, specific enzymatic cleavages in vivo by its own proteases yield mature proteins. 3CL-PRO and PL-PRO proteinases are autocatalytically processed.

The protein localises to the host membrane. Its subcellular location is the host cytoplasm. The protein resides in the host perinuclear region. It is found in the host endoplasmic reticulum-Golgi intermediate compartment. The enzyme catalyses Thiol-dependent hydrolysis of ester, thioester, amide, peptide and isopeptide bonds formed by the C-terminal Gly of ubiquitin (a 76-residue protein attached to proteins as an intracellular targeting signal).. It catalyses the reaction RNA(n) + a ribonucleoside 5'-triphosphate = RNA(n+1) + diphosphate. It carries out the reaction ATP + H2O = ADP + phosphate + H(+). The catalysed reaction is a 5'-end diphospho-ribonucleoside in mRNA + GTP + H(+) = a 5'-end (5'-triphosphoguanosine)-ribonucleoside in mRNA + diphosphate. The enzyme catalyses a 5'-end (N(7)-methyl 5'-triphosphoguanosine)-ribonucleoside in mRNA + S-adenosyl-L-methionine = a 5'-end (N(7)-methyl 5'-triphosphoguanosine)-(2'-O-methyl-ribonucleoside) in mRNA + S-adenosyl-L-homocysteine + H(+). It catalyses the reaction uridylyl-uridylyl-ribonucleotide-RNA = a 3'-end uridylyl-2',3'-cyclophospho-uridine-RNA + a 5'-end dephospho-ribonucleoside-RNA. The replicase polyprotein of coronaviruses is a multifunctional protein: it contains the activities necessary for the transcription of negative stranded RNA, leader RNA, subgenomic mRNAs and progeny virion RNA as well as proteinases responsible for the cleavage of the polyprotein into functional products. In terms of biological role, the papain-like proteinase 1 (PLP1) and papain-like proteinase 2 (PLP2) are responsible for the cleavages located at the N-terminus of the replicase polyprotein. In addition, PLP2 possesses a deubiquitinating/deISGylating activity and processes both 'Lys-48'- and 'Lys-63'-linked polyubiquitin chains from cellular substrates. PLP2 also antagonizes innate immune induction of type I interferon by blocking the nuclear translocation of host IRF-3. Its function is as follows. Responsible for the majority of cleavages as it cleaves the C-terminus of replicase polyprotein at 11 sites. Recognizes substrates containing the core sequence [ILMVF]-Q-|-[SGACN]. Inhibited by the substrate-analog Cbz-Val-Asn-Ser-Thr-Leu-Gln-CMK. Also contains an ADP-ribose-1''-phosphate (ADRP)-binding function. Functionally, the helicase which contains a zinc finger structure displays RNA and DNA duplex-unwinding activities with 5' to 3' polarity. ATPase activity is strongly stimulated by poly(U), poly(dT), poly(C), poly(dA), but not by poly(G). The exoribonuclease acts on both ssRNA and dsRNA in a 3' to 5' direction. In terms of biological role, nsp7-nsp8 hexadecamer may possibly confer processivity to the polymerase, maybe by binding to dsRNA or by producing primers utilized by the latter. Its function is as follows. Forms a primer, NSP9-pU, which is utilized by the polymerase for the initiation of RNA chains. Interacts with ribosome signal recognition particle RNA (SRP). Together with NSP8, suppress protein integration into the cell membrane, thereby disrupting host immune defenses. Functionally, RNA-directed RNA polymerase that catalyzes the transcription of viral genomic and subgenomic RNAs. Acts in complex with nsp7 and nsp8 to transcribe both the minus and positive strands of genomic RNA. The kinase-like NiRAN domain of NSP12 attaches one or more nucleotides to the amino terminus of NSP9, forming a covalent RNA-protein intermediate that serves as transcription/replication primer. Subgenomic RNAs (sgRNAs) are formed by discontinuous transcription: The polymerase has the ability to pause at transcription-regulating sequences (TRS) and jump to the leader TRS, resulting in a major deletion. This creates a series of subgenomic RNAs that are replicated, transcribed and translated. In addition, Nsp12 is a subunit of the viral RNA capping enzyme that catalyzes the RNA guanylyltransferase reaction for genomic and sub-genomic RNAs. Subsequently, the NiRAN domain transfers RNA to GDP, and forms the core cap structure GpppA-RNA. Plays a role in viral transcription/replication and prevents the simultaneous activation of host cell dsRNA sensors, such as MDA5/IFIH1, OAS, and PKR. Acts by degrading the 5'-polyuridines generated during replication of the poly(A) region of viral genomic and subgenomic RNAs. Catalyzes a two-step reaction in which a 2'3'-cyclic phosphate (2'3'-cP) is first generated by 2'-O transesterification, which is then hydrolyzed to a 3'-phosphate (3'-P). If not degraded, poly(U) RNA would hybridize with poly(A) RNA tails and activate host dsRNA sensors. The protein is Replicase polyprotein 1ab (rep) of Bat coronavirus 512/2005 (BtCoV).